Reading from the N-terminus, the 299-residue chain is Probable lipid kinase YegS (299 aa).

Positions 2-133 constitute a DAGKc domain; it reads AEFPASLLIL…IDMAQVNKQT (132 aa). Residues Thr40, 66–72, and Thr95 each bind ATP; that span reads GDGTINE. 3 residues coordinate Mg(2+): Leu215, Asp218, and Leu220. Glu271 (proton acceptor) is an active-site residue.

The protein belongs to the diacylglycerol/lipid kinase family. YegS lipid kinase subfamily. Mg(2+) is required as a cofactor. Ca(2+) serves as cofactor.

The protein localises to the cytoplasm. Probably phosphorylates lipids; the in vivo substrate is unknown. The protein is Probable lipid kinase YegS of Escherichia coli O45:K1 (strain S88 / ExPEC).